The primary structure comprises 207 residues: Dephospho-CoA kinase (207 aa).

In terms of domain architecture, DPCK spans 11–207 (RIGLTGGIAS…LLKMSPTAEL (197 aa)). 19 to 24 (ASGKSS) lines the ATP pocket.

Belongs to the CoaE family.

The protein localises to the cytoplasm. The catalysed reaction is 3'-dephospho-CoA + ATP = ADP + CoA + H(+). The protein operates within cofactor biosynthesis; coenzyme A biosynthesis; CoA from (R)-pantothenate: step 5/5. In terms of biological role, catalyzes the phosphorylation of the 3'-hydroxyl group of dephosphocoenzyme A to form coenzyme A. In Synechococcus sp. (strain CC9605), this protein is Dephospho-CoA kinase.